Reading from the N-terminus, the 191-residue chain is Thymidine kinase (191 aa).

Residues 9–16 (GSMNSGKT) and 85–88 (DESQ) contribute to the ATP site. The active-site Proton acceptor is the E86. The Zn(2+) site is built by C143, C146, C181, and C184.

Belongs to the thymidine kinase family. In terms of assembly, homotetramer.

It is found in the cytoplasm. It carries out the reaction thymidine + ATP = dTMP + ADP + H(+). The sequence is that of Thymidine kinase from Listeria monocytogenes serotype 4b (strain F2365).